A 404-amino-acid chain; its full sequence is tRNA (carboxymethyluridine(34)-5-O)-methyltransferase (404 aa).

Ser238 is modified (phosphoserine).

As to quaternary structure, interacts with TRM112A and TRM112B.

It carries out the reaction 5-(carboxymethyl)uridine(34) in tRNA + S-adenosyl-L-methionine = 5-(2-methoxy-2-oxoethyl)uridine(34) in tRNA + S-adenosyl-L-homocysteine. Catalyzes the methylation of 5-carboxymethyl uridine to 5-methylcarboxymethyl uridine at the wobble position of the anticodon loop in tRNA via its methyltransferase domain. Catalyzes the last step in the formation of 5-methylcarboxymethyl uridine at the wobble position of the anticodon loop in target tRNA. In Arabidopsis thaliana (Mouse-ear cress), this protein is tRNA (carboxymethyluridine(34)-5-O)-methyltransferase.